The chain runs to 266 residues: Protein YdcF (266 aa).

It to S.coelicolor SCO4629. As to quaternary structure, monomer.

Its function is as follows. Binds S-adenosyl-L-methionine (AdoMet). This chain is Protein YdcF (ydcF), found in Escherichia coli (strain K12).